The chain runs to 338 residues: Ferrochelatase (338 aa).

The Fe cation site is built by His189 and Glu293.

It belongs to the ferrochelatase family.

Its subcellular location is the cytoplasm. It carries out the reaction heme b + 2 H(+) = protoporphyrin IX + Fe(2+). It participates in porphyrin-containing compound metabolism; protoheme biosynthesis; protoheme from protoporphyrin-IX: step 1/1. Its function is as follows. Catalyzes the ferrous insertion into protoporphyrin IX. This chain is Ferrochelatase, found in Azotobacter vinelandii (strain DJ / ATCC BAA-1303).